A 283-amino-acid chain; its full sequence is Pantothenate synthetase (283 aa).

Residue 26–33 coordinates ATP; the sequence is MGNLHEGH. The active-site Proton donor is the histidine 33. Glutamine 57 contacts (R)-pantoate. Glutamine 57 contacts beta-alanine. ATP is bound at residue 144–147; the sequence is GKKD. Residue glutamine 150 coordinates (R)-pantoate. Residues valine 173 and 181–184 each bind ATP; that span reads LSSR.

The protein belongs to the pantothenate synthetase family. Homodimer.

Its subcellular location is the cytoplasm. The enzyme catalyses (R)-pantoate + beta-alanine + ATP = (R)-pantothenate + AMP + diphosphate + H(+). It participates in cofactor biosynthesis; (R)-pantothenate biosynthesis; (R)-pantothenate from (R)-pantoate and beta-alanine: step 1/1. In terms of biological role, catalyzes the condensation of pantoate with beta-alanine in an ATP-dependent reaction via a pantoyl-adenylate intermediate. The protein is Pantothenate synthetase of Ralstonia nicotianae (strain ATCC BAA-1114 / GMI1000) (Ralstonia solanacearum).